A 318-amino-acid chain; its full sequence is Acetyl-coenzyme A carboxylase carboxyl transferase subunit alpha (318 aa).

Positions 38 to 292 (KLEKRLAKLE…NKTITKSLHA (255 aa)) constitute a CoA carboxyltransferase C-terminal domain.

The protein belongs to the AccA family. Acetyl-CoA carboxylase is a heterohexamer composed of biotin carboxyl carrier protein (AccB), biotin carboxylase (AccC) and two subunits each of ACCase subunit alpha (AccA) and ACCase subunit beta (AccD).

The protein resides in the cytoplasm. It carries out the reaction N(6)-carboxybiotinyl-L-lysyl-[protein] + acetyl-CoA = N(6)-biotinyl-L-lysyl-[protein] + malonyl-CoA. It functions in the pathway lipid metabolism; malonyl-CoA biosynthesis; malonyl-CoA from acetyl-CoA: step 1/1. Its function is as follows. Component of the acetyl coenzyme A carboxylase (ACC) complex. First, biotin carboxylase catalyzes the carboxylation of biotin on its carrier protein (BCCP) and then the CO(2) group is transferred by the carboxyltransferase to acetyl-CoA to form malonyl-CoA. The protein is Acetyl-coenzyme A carboxylase carboxyl transferase subunit alpha of Listeria monocytogenes serotype 4b (strain CLIP80459).